Reading from the N-terminus, the 427-residue chain is UDP-N-acetylglucosamine--N-acetylmuramyl-(pentapeptide) pyrophosphoryl-undecaprenol N-acetylglucosamine transferase (427 aa).

Residues T29 to G31, N141, R177, S205, I258, and Q303 each bind UDP-N-acetyl-alpha-D-glucosamine. Positions S408–Q427 are disordered.

The protein belongs to the glycosyltransferase 28 family. MurG subfamily.

The protein resides in the cell inner membrane. The enzyme catalyses di-trans,octa-cis-undecaprenyl diphospho-N-acetyl-alpha-D-muramoyl-L-alanyl-D-glutamyl-meso-2,6-diaminopimeloyl-D-alanyl-D-alanine + UDP-N-acetyl-alpha-D-glucosamine = di-trans,octa-cis-undecaprenyl diphospho-[N-acetyl-alpha-D-glucosaminyl-(1-&gt;4)]-N-acetyl-alpha-D-muramoyl-L-alanyl-D-glutamyl-meso-2,6-diaminopimeloyl-D-alanyl-D-alanine + UDP + H(+). Its pathway is cell wall biogenesis; peptidoglycan biosynthesis. Functionally, cell wall formation. Catalyzes the transfer of a GlcNAc subunit on undecaprenyl-pyrophosphoryl-MurNAc-pentapeptide (lipid intermediate I) to form undecaprenyl-pyrophosphoryl-MurNAc-(pentapeptide)GlcNAc (lipid intermediate II). The chain is UDP-N-acetylglucosamine--N-acetylmuramyl-(pentapeptide) pyrophosphoryl-undecaprenol N-acetylglucosamine transferase from Xanthomonas campestris pv. campestris (strain B100).